Consider the following 1162-residue polypeptide: DNA-directed RNA polymerase subunit beta (1162 aa).

It belongs to the RNA polymerase beta chain family. In terms of assembly, the RNAP catalytic core consists of 2 alpha, 1 beta, 1 beta' and 1 omega subunit. When a sigma factor is associated with the core the holoenzyme is formed, which can initiate transcription.

The catalysed reaction is RNA(n) + a ribonucleoside 5'-triphosphate = RNA(n+1) + diphosphate. In terms of biological role, DNA-dependent RNA polymerase catalyzes the transcription of DNA into RNA using the four ribonucleoside triphosphates as substrates. In Clavibacter michiganensis subsp. michiganensis (strain NCPPB 382), this protein is DNA-directed RNA polymerase subunit beta.